The sequence spans 506 residues: Cytochrome P450 6a2 (506 aa).

Cys-451 lines the heme pocket.

The protein belongs to the cytochrome P450 family. The cofactor is heme.

It localises to the endoplasmic reticulum membrane. Its subcellular location is the microsome membrane. Is involved in the breakdown of synthetic insecticides and may be involved in the metabolism of insect hormones. The chain is Cytochrome P450 6a2 (Cyp6a2) from Drosophila melanogaster (Fruit fly).